Reading from the N-terminus, the 284-residue chain is Nucleotide-binding protein VF_0384 (284 aa).

Residue 8-15 participates in ATP binding; it reads GSSGAGKS. 56–59 provides a ligand contact to GTP; that stretch reads DIRN.

Belongs to the RapZ-like family.

Functionally, displays ATPase and GTPase activities. This Aliivibrio fischeri (strain ATCC 700601 / ES114) (Vibrio fischeri) protein is Nucleotide-binding protein VF_0384.